The sequence spans 187 residues: Resolvase OPG149 (187 aa).

Belongs to the RuvC family. Poxviruses-type subfamily. Requires Mg(2+) as cofactor.

Plays a role in DNA replication by cleaving viral DNA concatamers to yield unit-length viral genomes. The concatamer junctions contain inverted repeat sequences that can be extruded as cruciforms, yielding Holliday junctions that A22 protein cleaves. This Cynomys gunnisoni (Gunnison's prairie dog) protein is Resolvase OPG149 (OPG149).